We begin with the raw amino-acid sequence, 166 residues long: uncharacterized protein (166 aa).

Over residues 73 to 88 the composition is skewed to low complexity; it reads SKLNNNNNSNNNNKMA. 2 disordered regions span residues 73–101 and 126–166; these read SKLN…EKDK and PQSS…EFNN. The span at 89-101 shows a compositional bias: basic and acidic residues; sequence VDNKDNKDNEKDK. The segment covering 134–154 has biased composition (low complexity); it reads SPTHKSPSSSPKTISPVKVSP. The segment covering 155 to 166 has biased composition (polar residues); the sequence is TSSPIKNPEFNN.

This is an uncharacterized protein from Dictyostelium discoideum (Social amoeba).